The primary structure comprises 389 residues: Epidermis-specific secreted glycoprotein EP1 (389 aa).

The N-terminal stretch at 1–24 (MARFFPLTLTILLFFIQRIDFCHT) is a signal peptide. N-linked (GlcNAc...) (complex) asparagine glycosylation is present at asparagine 29. The Bulb-type lectin domain maps to 88 to 193 (MRWVWEANRG…ASPGENVNGP (106 aa)). Residues asparagine 103, asparagine 230, and asparagine 235 are each glycosylated (N-linked (GlcNAc...) asparagine). Asparagine 274 carries an N-linked (GlcNAc...) (high mannose) asparagine glycan.

As to expression, in 14-day old seedlings, expressed in the epidermis and apical dome of the shoot and in the hypocotyl, cotyledon and epidermis of the root. In developing seeds, expressed in both the inner and outer epidermis of the integument.

The protein resides in the secreted. May be involved in the limitation of water flow through the outer epidermal cell wall, either by direct modification of wall structure or as a signal instructing the protoplast to restrict water transport across the cell wall. The sequence is that of Epidermis-specific secreted glycoprotein EP1 (EP1) from Daucus carota (Wild carrot).